Consider the following 418-residue polypeptide: Argininosuccinate synthase (418 aa).

ATP-binding positions include 14–22 (AYSGGLDTS) and A42. L-citrulline is bound by residues Y94 and S99. Position 124 (G124) interacts with ATP. Residues T126, N130, and D131 each coordinate L-aspartate. N130 is a binding site for L-citrulline. 5 residues coordinate L-citrulline: R134, S183, S192, E273, and Y285.

This sequence belongs to the argininosuccinate synthase family. Type 1 subfamily. As to quaternary structure, homotetramer.

The protein resides in the cytoplasm. It catalyses the reaction L-citrulline + L-aspartate + ATP = 2-(N(omega)-L-arginino)succinate + AMP + diphosphate + H(+). Its pathway is amino-acid biosynthesis; L-arginine biosynthesis; L-arginine from L-ornithine and carbamoyl phosphate: step 2/3. This is Argininosuccinate synthase from Colwellia psychrerythraea (strain 34H / ATCC BAA-681) (Vibrio psychroerythus).